The chain runs to 216 residues: Cell division protein SepF (216 aa).

Positions 22-126 (EYVEEPDQAR…PVVDDGGPLA (105 aa)) are disordered. 3 stretches are compositionally biased toward basic and acidic residues: residues 28–50 (DQAR…REFV), 62–80 (SRRD…RPRV), and 106–118 (ARAE…RAPV).

It belongs to the SepF family. As to quaternary structure, homodimer. Interacts with FtsZ.

The protein resides in the cytoplasm. Functionally, cell division protein that is part of the divisome complex and is recruited early to the Z-ring. Probably stimulates Z-ring formation, perhaps through the cross-linking of FtsZ protofilaments. Its function overlaps with FtsA. This chain is Cell division protein SepF, found in Rhodococcus erythropolis (strain PR4 / NBRC 100887).